Here is a 337-residue protein sequence, read N- to C-terminus: Ketol-acid reductoisomerase (NADP(+)) (337 aa).

Residues 3–183 (IELLYDADAD…GGARAGVIPT (181 aa)) form the KARI N-terminal Rossmann domain. Residues 26 to 29 (YGSQ), Arg49, Ser52, Ser54, and 84 to 87 (DTSQ) contribute to the NADP(+) site. The active site involves His109. Gly135 is an NADP(+) binding site. The region spanning 184–329 (TFREETETDL…SKLRDLMSWV (146 aa)) is the KARI C-terminal knotted domain. Residues Asp192, Glu196, Glu228, and Glu232 each coordinate Mg(2+). Ser253 is a binding site for substrate.

It belongs to the ketol-acid reductoisomerase family. It depends on Mg(2+) as a cofactor.

The catalysed reaction is (2R)-2,3-dihydroxy-3-methylbutanoate + NADP(+) = (2S)-2-acetolactate + NADPH + H(+). It catalyses the reaction (2R,3R)-2,3-dihydroxy-3-methylpentanoate + NADP(+) = (S)-2-ethyl-2-hydroxy-3-oxobutanoate + NADPH + H(+). It functions in the pathway amino-acid biosynthesis; L-isoleucine biosynthesis; L-isoleucine from 2-oxobutanoate: step 2/4. It participates in amino-acid biosynthesis; L-valine biosynthesis; L-valine from pyruvate: step 2/4. Its function is as follows. Involved in the biosynthesis of branched-chain amino acids (BCAA). Catalyzes an alkyl-migration followed by a ketol-acid reduction of (S)-2-acetolactate (S2AL) to yield (R)-2,3-dihydroxy-isovalerate. In the isomerase reaction, S2AL is rearranged via a Mg-dependent methyl migration to produce 3-hydroxy-3-methyl-2-ketobutyrate (HMKB). In the reductase reaction, this 2-ketoacid undergoes a metal-dependent reduction by NADPH to yield (R)-2,3-dihydroxy-isovalerate. This is Ketol-acid reductoisomerase (NADP(+)) from Corynebacterium diphtheriae (strain ATCC 700971 / NCTC 13129 / Biotype gravis).